The following is a 117-amino-acid chain: Putative pterin-4-alpha-carbinolamine dehydratase (117 aa).

It belongs to the pterin-4-alpha-carbinolamine dehydratase family.

It catalyses the reaction (4aS,6R)-4a-hydroxy-L-erythro-5,6,7,8-tetrahydrobiopterin = (6R)-L-erythro-6,7-dihydrobiopterin + H2O. The polypeptide is Putative pterin-4-alpha-carbinolamine dehydratase (Azoarcus sp. (strain BH72)).